A 333-amino-acid chain; its full sequence is Phosphate acyltransferase (333 aa).

This sequence belongs to the PlsX family. In terms of assembly, homodimer. Probably interacts with PlsY.

It localises to the cytoplasm. The catalysed reaction is a fatty acyl-[ACP] + phosphate = an acyl phosphate + holo-[ACP]. Its pathway is lipid metabolism; phospholipid metabolism. Its function is as follows. Catalyzes the reversible formation of acyl-phosphate (acyl-PO(4)) from acyl-[acyl-carrier-protein] (acyl-ACP). This enzyme utilizes acyl-ACP as fatty acyl donor, but not acyl-CoA. The sequence is that of Phosphate acyltransferase from Lactobacillus johnsonii (strain CNCM I-12250 / La1 / NCC 533).